The chain runs to 593 residues: Phosphoinositide phosphatase SAC6 (593 aa).

The 329-residue stretch at 128–456 folds into the SAC domain; it reads LSVAERTTGL…GDDISIQYSG (329 aa). Residues 391–402 carry the Phosphatase catalytic core motif; it reads RTNCIDCLDRTN. Helical transmembrane passes span 526–546 and 555–575; these read AVAN…FATM and YKHL…AALV.

Predominantly expressed in flowers.

It is found in the endoplasmic reticulum membrane. Its function is as follows. Phosphoinositide phosphatase that hydrolyzes PtdIns(3)P and PtdIns(4)P. Involved in priming for different defense responses. This Arabidopsis thaliana (Mouse-ear cress) protein is Phosphoinositide phosphatase SAC6 (SAC6).